A 246-amino-acid chain; its full sequence is Protein 3F (246 aa).

A signal peptide spans 1–19 (MKLLSKLILTLALATYASA). N-linked (GlcNAc...) asparagine glycosylation is present at N52. The segment covering 113–124 (EVRPIDRLKDNA) has biased composition (basic and acidic residues). The interval 113 to 223 (EVRPIDRLKD…EEAEHVEKGA (111 aa)) is disordered. Over residues 126–145 (AANTENAQKSPNTQSTQKGS) the composition is skewed to polar residues. A run of 3 repeats spans residues 145-153 (SPKSDAKEA), 154-162 (SPKTDAKEA), and 163-171 (SPKSDAKEA). The segment at 145–176 (SPKSDAKEASPKTDAKEASPKSDAKEASPKTD) is 3.5 X 9 AA tandem repeats of S-P-K-[ST]-D-A-K-E-A. Positions 146-177 (PKSDAKEASPKTDAKEASPKSDAKEASPKTDT) are enriched in basic and acidic residues. The 4; truncated repeat unit spans residues 172–176 (SPKTD). The segment covering 181–213 (SSPKTDTKSSTQKPSSSSDSSKAKAEANTAANN) has biased composition (low complexity).

In Dictyostelium discoideum (Social amoeba), this protein is Protein 3F (pspG).